A 39-amino-acid polypeptide reads, in one-letter code: Photosystem II reaction center protein Y (39 aa).

Residues 4–24 (RVIVVVSPLLIAATWAAINIG) traverse the membrane as a helical segment.

The protein belongs to the PsbY family. PSII is composed of 1 copy each of membrane proteins PsbA, PsbB, PsbC, PsbD, PsbE, PsbF, PsbH, PsbI, PsbJ, PsbK, PsbL, PsbM, PsbT, PsbX, PsbY, PsbZ, Psb30/Ycf12, peripheral proteins PsbO, CyanoQ (PsbQ), PsbU, PsbV and a large number of cofactors. It forms dimeric complexes.

It localises to the cellular thylakoid membrane. In terms of biological role, loosely associated component of the core of photosystem II (PSII), it is not always seen in crystals. PSII is a light-driven water plastoquinone oxidoreductase, using light energy to abstract electrons from H(2)O, generating a proton gradient subsequently used for ATP formation. This is Photosystem II reaction center protein Y from Synechocystis sp. (strain ATCC 27184 / PCC 6803 / Kazusa).